The chain runs to 130 residues: Small ribosomal subunit protein uS9 (130 aa).

The protein belongs to the universal ribosomal protein uS9 family.

This is Small ribosomal subunit protein uS9 (rpsI) from Shigella flexneri.